The chain runs to 1015 residues: Condensin complex subunit 3 (1015 aa).

5 HEAT repeats span residues 94-131 (GLLNYLFTFLLKSHEANSNAVRFRVCLLINKLLGSMPE), 138-173 (DVFDKINKAMLIRLKDKIPNVRIQAVLALSRLQDPK), 174-212 (DDECPVVNAYATLIENDSNPEVRRAVLSCIAPSAKTLPK), 238-275 (MRAMSIAQRVMLLQQGLNDRSDAVKQAMQKHLLQGWLR), and 276-313 (FSEGNILELLHRLDVENSSEVAVSVLNALFSITPLSEL). Residue Ser-390 is modified to Phosphoserine. HEAT repeat units follow at residues 399–436 (EFIGQQLILIIKSLDTSEEGGRKKLLAVLQEILILPTI), 439–478 (SLVSFLVERLLHIIIDDNKRTQIVTEIISEIRAPIVTVGV), and 617–654 (DFARKHFVLLLQVLQIDDVTIKISALKAIFDQLMTFGI). Ser-674 carries the phosphoserine modification. 2 HEAT repeats span residues 687-724 (ATAKNVLKLLSDFLDSEVSELRTGAAEGLAKLMFSGLL) and 865-907 (KDLL…QAEA). The residue at position 931 (Thr-931) is a Phosphothreonine. Residues 941 to 950 (ASKSTQLKTN) are compositionally biased toward polar residues. The segment at 941 to 994 (ASKSTQLKTNRGQRKVTVSARTNRRCQTAEADSESDHEVPEPESEMKMRLPRRA) is disordered. 4 positions are modified to phosphoserine: Ser-973, Ser-975, Ser-1002, and Ser-1015. Positions 974 to 988 (ESDHEVPEPESEMKM) are enriched in basic and acidic residues.

This sequence belongs to the CND3 (condensin subunit 3) family. As to quaternary structure, component of the condensin complex, which contains the SMC2 and SMC4 heterodimer, and three non SMC subunits that probably regulate the complex: NCAPH/BRRN1, NCAPD2/CAPD2 and NCAPG. Post-translationally, phosphorylated by CDK1. Its phosphorylation, as well as that of NCAPD2 and NCAPH subunits, activates the condensin complex and is required for chromosome condensation. In terms of tissue distribution, highly expressed in testis.

It is found in the nucleus. The protein resides in the cytoplasm. Its subcellular location is the chromosome. In terms of biological role, regulatory subunit of the condensin complex, a complex required for conversion of interphase chromatin into mitotic-like condense chromosomes. The condensin complex probably introduces positive supercoils into relaxed DNA in the presence of type I topoisomerases and converts nicked DNA into positive knotted forms in the presence of type II topoisomerases. This is Condensin complex subunit 3 (NCAPG) from Homo sapiens (Human).